We begin with the raw amino-acid sequence, 85 residues long: Large ribosomal subunit protein bL27 (85 aa).

Belongs to the bacterial ribosomal protein bL27 family.

In Mycobacteroides abscessus (strain ATCC 19977 / DSM 44196 / CCUG 20993 / CIP 104536 / JCM 13569 / NCTC 13031 / TMC 1543 / L948) (Mycobacterium abscessus), this protein is Large ribosomal subunit protein bL27.